A 728-amino-acid chain; its full sequence is Protein Hook homolog 1 (728 aa).

At Met-1 the chain carries N-acetylmethionine. A sufficient for interaction with microtubules region spans residues 1-555 (MEDPQPLPQS…LKQKLEAHME (555 aa)). Residues 12 to 128 (LPLCDSLIIW…RLLQLILGCA (117 aa)) enclose the Calponin-homology (CH) domain. 2 coiled-coil regions span residues 168 to 443 (PASD…LNQA) and 477 to 658 (LRLQ…AKLR). Position 235 is a phosphoserine (Ser-235). Residues 481–510 (QEGTENERIEQLQEQLEQKHRKMNELETEQ) form a disordered region. Residues 657 to 728 (LRDYEEKLIV…SVKVPAAASD (72 aa)) are sufficient for interaction with AKTIP and VPS18. Ser-719 and Ser-727 each carry phosphoserine.

Belongs to the hook family. As to quaternary structure, self-associates. Component of the FTS/Hook/FHIP complex (FHF complex), composed of AKTIP/FTS, FHIP1B, and one or more members of the Hook family of proteins HOOK1, HOOK2, and HOOK3. Interacts directly with AKTIP/FTS, HOOK2 and HOOK3. Associates with several subunits of the homotypic vesicular sorting complex (the HOPS complex) including VPS16, VPS18, VPS39 and VPS41; these interactions may be indirect. Interacts with CCDC181. Interacts (via coiled-coil region) with RIMBP3 (via C-terminus). Interacts with LRGUK (via guanylate kinase-like domain). Interacts with microtubules. May interacts with CLN3. Interacts with AP4M1; the interaction is direct, mediates the interaction between FTS-Hook-FHIP (FHF) complex and AP-4 and the perinuclear distribution of AP-4. As to expression, mainly expressed in testis.

The protein resides in the cytoplasm. It localises to the cytoskeleton. In terms of biological role, component of the FTS/Hook/FHIP complex (FHF complex). The FHF complex may function to promote vesicle trafficking and/or fusion via the homotypic vesicular protein sorting complex (the HOPS complex). FHF complex promotes the distribution of AP-4 complex to the perinuclear area of the cell. Required for spermatid differentiation. Probably involved in the positioning of the microtubules of the manchette and the flagellum in relation to the membrane skeleton. The protein is Protein Hook homolog 1 (Hook1) of Mus musculus (Mouse).